An 81-amino-acid polypeptide reads, in one-letter code: Omega-conotoxin-like 3 (81 aa).

Residues 1 to 22 form the signal peptide; it reads MKLTCMMIVAVLFLTASIFITA. The propeptide occupies 23–51; that stretch reads DNSRNGIENLPRMRRHEMKKPKASKLNKR. 3 disulfide bridges follow: Cys-53–Cys-71, Cys-60–Cys-75, and Cys-70–Cys-79.

Belongs to the conotoxin O1 superfamily. In terms of tissue distribution, expressed by the venom duct.

The protein resides in the secreted. Omega-conotoxins act at presynaptic membranes, they bind and block voltage-gated calcium channels (Cav). The protein is Omega-conotoxin-like 3 of Conus imperialis (Imperial cone).